The sequence spans 361 residues: Probable galacturonosyltransferase-like 7 (361 aa).

A helical; Signal-anchor for type II membrane protein membrane pass occupies residues 1 to 21 (MLWIMRFSGLFSAALVIIVLS). Over 22-361 (PSLQSFPPAE…PYDLYGHYSR (340 aa)) the chain is Lumenal. Asn217 is a glycosylation site (N-linked (GlcNAc...) asparagine).

Belongs to the glycosyltransferase 8 family.

The protein localises to the golgi apparatus membrane. It participates in glycan metabolism; pectin biosynthesis. Functionally, may be involved in pectin and/or xylans biosynthesis in cell walls. The chain is Probable galacturonosyltransferase-like 7 (GATL7) from Arabidopsis thaliana (Mouse-ear cress).